The primary structure comprises 446 residues: Probable cytosolic iron-sulfur protein assembly protein 1 (446 aa).

7 WD repeats span residues 17–59, 63–106, 143–182, 192–241, 247–291, 330–368, and 398–446; these read AFKP…AHSN, GHTR…PLEE, GHEN…EGDD, EHDG…EWAC, GHSS…PEAS, VHTR…NPST, and GHGP…SIEL. Basic and acidic residues predominate over residues 106 to 128; sequence EGTKKGESTEIDVTRRRNNNDSD. The disordered stretch occupies residues 106–133; it reads EGTKKGESTEIDVTRRRNNNDSDKDNDD.

Belongs to the WD repeat CIA1 family.

Essential component of the cytosolic iron-sulfur (Fe/S) protein assembly machinery. Required for the maturation of extramitochondrial Fe/S proteins. The polypeptide is Probable cytosolic iron-sulfur protein assembly protein 1 (Pyricularia oryzae (strain 70-15 / ATCC MYA-4617 / FGSC 8958) (Rice blast fungus)).